Reading from the N-terminus, the 976-residue chain is Synaptonemal complex protein 1 (976 aa).

A Mediates head to head self-assembly of N-terminal ends motif is present at residues 101–111; sequence GLSRVYSKLYK. Positions 117–120 match the Nuclear localization signal motif; sequence KKWK. Residues 206-362 are interaction with SYCE3; sequence ETRQVYMDLN…CQLTEEKETQ (157 aa). Coiled coils occupy residues 211-316, 391-439, 499-685, and 739-798; these read YMDL…SIEK, LRTE…LKKV, VKDL…VEKA, and EQEQ…KTQT. The tract at residues 676-770 is required for pH-induced assembly of C-terminal ends into antiparallel tetramers; that stretch reads ENLLEEVEKA…LSVKKQLEIE (95 aa). The Nuclear localization signal signature appears at 679 to 682; that stretch reads LEEV. The DNA-binding stretch occupies residues 784-976; it reads NTATLKEKKD…KLKEAEKLFV (193 aa). A Nuclear localization signal motif is present at residues 880 to 883; that stretch reads KKRK.

Structural component of synaptonemal complexes. Homotetramer that consists of an N-terminal four-helical bundle that bifurcates into two elongated C-terminal dimeric coiled coils. This tetrameric building block potentially self-assembles into a supramolecular zipper-like lattice to mediate meiotic chromosome synapsis. Self-assembly is likely initiated by local proton density at chromosome axis, which is predicted to trigger antiparallel back to back assembly of adjacent C-terminal ends into tetrameric structures that anchor to chromosomal DNA. Then the N-terminal ends are predicted to undergo cooperative antiparallel head to head assembly at the midline of synaptonemal complexes central element to form a zipper-like lattice between properly aligned homologous chromosomes. The nascent synapsis generated by SYCP1 is stabilized through interaction with central element proteins SYCE1 and SYCE2. Interacts (via tetrameric core) with SYCE3; the interaction remodels SYCP1 homotetramers to 2:1 heterotrimers with SYCE3. SYCP1/SYCE3 heterotrimers form lattice assemblies as part of the mature synaptonemal complex via both lateral and head-to-head interactions. Forms a complex with EWSR1, PRDM9, SYCP3 and REC8; complex formation is dependent of phosphorylated form of REC8 and requires PRDM9 bound to hotspot DNA; EWSR1 joins PRDM9 with the chromosomal axis through REC8. Interacts with SPO16. In terms of tissue distribution, testis.

It is found in the nucleus. The protein localises to the chromosome. It localises to the centromere. Functionally, major component of the transverse filaments of synaptonemal complexes, formed between homologous chromosomes during meiotic prophase. Required for normal assembly of the central element of the synaptonemal complexes. Required for normal centromere pairing during meiosis. Required for normal meiotic chromosome synapsis during oocyte and spermatocyte development and for normal male and female fertility. The sequence is that of Synaptonemal complex protein 1 from Homo sapiens (Human).